Reading from the N-terminus, the 481-residue chain is Glutamate--glyoxylate aminotransferase 1 (481 aa).

N6-(pyridoxal phosphate)lysine is present on lysine 291. The Peroxisomal targeting signal motif lies at 479–481 (SKM).

The protein belongs to the class-I pyridoxal-phosphate-dependent aminotransferase family. Alanine aminotransferase subfamily. In terms of assembly, homodimer. Pyridoxal 5'-phosphate serves as cofactor. Post-translationally, the N-terminus is blocked. In terms of tissue distribution, mostly expressed in leaves, and, to a lower extent, in shoots, stems, flowers, seedlings and green siliques.

The protein resides in the peroxisome. The enzyme catalyses L-alanine + 2-oxoglutarate = pyruvate + L-glutamate. The catalysed reaction is glyoxylate + L-alanine = glycine + pyruvate. It catalyses the reaction glycine + 2-oxoglutarate = glyoxylate + L-glutamate. Its pathway is amino-acid biosynthesis; glycine biosynthesis; glycine from glyoxylate: step 1/1. It participates in photosynthesis; C4 acid pathway. It functions in the pathway amino-acid degradation; L-alanine degradation via transaminase pathway; pyruvate from L-alanine: step 1/1. Functionally, catalyzes the glutamate:glyoxylate (GGT or GGAT), alanine:glyoxylate (AGT), alanine:2-oxoglutarate (AKT) and glutamate:pyruvate (GPT) aminotransferase reactions in peroxisomes. Required for abscisic acid (ABA)- and stress-mediated responses in an H(2)O(2)-dependent manner. Functions as a photorespiratory aminotransferase that modulates amino acid content during photorespiration (GGAT activity); promotes serine, glycine and citrulline metabolism in response to light. The protein is Glutamate--glyoxylate aminotransferase 1 (GGAT1) of Arabidopsis thaliana (Mouse-ear cress).